The sequence spans 74 residues: Exodeoxyribonuclease 7 small subunit (74 aa).

It belongs to the XseB family. In terms of assembly, heterooligomer composed of large and small subunits.

The protein resides in the cytoplasm. It catalyses the reaction Exonucleolytic cleavage in either 5'- to 3'- or 3'- to 5'-direction to yield nucleoside 5'-phosphates.. Its function is as follows. Bidirectionally degrades single-stranded DNA into large acid-insoluble oligonucleotides, which are then degraded further into small acid-soluble oligonucleotides. The polypeptide is Exodeoxyribonuclease 7 small subunit (Ruthia magnifica subsp. Calyptogena magnifica).